The chain runs to 242 residues: Octanoyltransferase (242 aa).

In terms of domain architecture, BPL/LPL catalytic spans 31-206; sequence SQTTDEIWFL…LFLKNFGYNQ (176 aa). Substrate is bound by residues 70–77, 137–139, and 150–152; these read RGGQVTYH, SIG, and GLA. Cys-168 functions as the Acyl-thioester intermediate in the catalytic mechanism.

It belongs to the LipB family.

Its subcellular location is the cytoplasm. The catalysed reaction is octanoyl-[ACP] + L-lysyl-[protein] = N(6)-octanoyl-L-lysyl-[protein] + holo-[ACP] + H(+). It functions in the pathway protein modification; protein lipoylation via endogenous pathway; protein N(6)-(lipoyl)lysine from octanoyl-[acyl-carrier-protein]: step 1/2. In terms of biological role, catalyzes the transfer of endogenously produced octanoic acid from octanoyl-acyl-carrier-protein onto the lipoyl domains of lipoate-dependent enzymes. Lipoyl-ACP can also act as a substrate although octanoyl-ACP is likely to be the physiological substrate. The polypeptide is Octanoyltransferase (Coxiella burnetii (strain Dugway 5J108-111)).